The following is a 117-amino-acid chain: Transcription elongation factor SPT4-B (117 aa).

Residues 1–40 form an interaction with SUPT5H region; that stretch reads MALETVPKDLRHLRACLLCSLVKTIDQFEYDGCDNCDAYL. The C4-type zinc-finger motif lies at 16 to 36; it reads CLLCSLVKTIDQFEYDGCDNC.

It belongs to the SPT4 family. In terms of assembly, interacts with SUPT5H to form DSIF. DSIF interacts with the positive transcription elongation factor b complex (P-TEFb complex), which is composed of CDK9 and cyclin-T (CCNT1 or CCNT2). DSIF interacts with RNA polymerase II, and this interaction is reduced by phosphorylation of the C-terminal domain (CTD) of POLR2A by P-TEFb. DSIF also interacts with the NELF complex, which is composed of WHSC2/NELFA, COBRA1/NELFB, TH1L/NELFD and RDBP/NELFE, and this interaction occurs following prior binding of DSIF to RNA polymerase II. DSIF also interacts with HRMT1L2/PRMT1, HTATSF1/TATSF1, RNGTT/CAP1A, SKB1/PRMT5, SUPT6H, and can interact with PIN1. Ubiquitinated by Ubr5 when not assembled in the DSIF complex, leading to its degradation: Ubr5 recognizes and binds a degron that is not accessible when Supt4h1b is part of the DSIF complex. In terms of tissue distribution, expressed in brain, heart and liver.

It is found in the nucleus. Its function is as follows. Component of the DRB sensitivity-inducing factor complex (DSIF complex), which regulates mRNA processing and transcription elongation by RNA polymerase II. DSIF positively regulates mRNA capping by stimulating the mRNA guanylyltransferase activity of RNGTT/CAP1A. DSIF also acts cooperatively with the negative elongation factor complex (NELF complex) to enhance transcriptional pausing at sites proximal to the promoter. Transcriptional pausing may facilitate the assembly of an elongation competent RNA polymerase II complex. DSIF and NELF promote pausing by inhibition of the transcription elongation factor TFIIS/S-II. TFIIS/S-II binds to RNA polymerase II at transcription pause sites and stimulates the weak intrinsic nuclease activity of the enzyme. Cleavage of blocked transcripts by RNA polymerase II promotes the resumption of transcription from the new 3' terminus and may allow repeated attempts at transcription through natural pause sites. This chain is Transcription elongation factor SPT4-B (Supt4h1b), found in Mus musculus (Mouse).